The primary structure comprises 760 residues: DEAD-box ATP-dependent RNA helicase 24 (760 aa).

2 disordered regions span residues 1–76 (MSNR…GEVD) and 90–113 (QEMK…DDDD). Residues 14–27 (NRQTSYSFERSQAP) show a composition bias toward polar residues. Positions 41–64 (NSEDADLDNIDYMENEEAEEDIEE) are enriched in acidic residues. A compositionally biased stretch (basic and acidic residues) spans 99-109 (KPKEKLERYKD). Ser160 carries the post-translational modification Phosphoserine. The short motif at 228–256 (KTFEDCGFSSQIMSAIKKQAYEKPTAIQC) is the Q motif element. The Helicase ATP-binding domain occupies 259–434 (LPIVLSGRDV…REILSDPIRV (176 aa)). An ATP-binding site is contributed by 272–279 (AKTGSGKT). Residues 382–385 (DEAD) carry the DEAD box motif. The 150-residue stretch at 459–608 (KLPWLLEKLP…NVPPELTDLA (150 aa)) folds into the Helicase C-terminal domain. Disordered regions lie at residues 604 to 638 (LTDL…KGVR), 647 to 666 (GFSS…SRSG), and 706 to 760 (FVSG…GWDN). Residues 615-628 (KSKRDGRKGGKKGR) show a composition bias toward basic residues. Residues 629 to 638 (GGGGGNKGVR) show a composition bias toward gly residues. A compositionally biased stretch (polar residues) spans 649 to 666 (SSESSRTPSSKAAPSRSG). The segment covering 707-716 (VSGGTIGGDM) has biased composition (gly residues). A compositionally biased stretch (polar residues) spans 718 to 732 (RTQSQAPPVAPTQNA). Positions 733 to 745 (SSHNSSQNHSQSS) are enriched in low complexity. The segment covering 750–760 (RERKRRSGWDN) has biased composition (basic residues).

It belongs to the DEAD box helicase family.

The enzyme catalyses ATP + H2O = ADP + phosphate + H(+). In Arabidopsis thaliana (Mouse-ear cress), this protein is DEAD-box ATP-dependent RNA helicase 24 (RH24).